Reading from the N-terminus, the 579-residue chain is Type II restriction enzyme FokI (579 aa).

Active-site residues include Asp450, Asp467, and Lys469.

Monomer, in which form it can cleave DNA. Homodimer when bound to DNA. The cofactor is Mg(2+).

The enzyme catalyses Endonucleolytic cleavage of DNA to give specific double-stranded fragments with terminal 5'-phosphates.. Functionally, an S subtype restriction enzyme that recognizes the asymmetric double-stranded sequence 5'-GGATG-3' and cleaves respectively 14 bases after G-1 (top strand) and 13 bases before C-1 (bottom strand). This Planomicrobium okeanokoites (Planococcus okeanokoites) protein is Type II restriction enzyme FokI.